The sequence spans 394 residues: Flap endonuclease 1-A (394 aa).

The tract at residues 1–105 (MGIKGLTKLI…RELAKRFARR (105 aa)) is N-domain. Position 34 (Asp34) interacts with Mg(2+). Arg71 contributes to the DNA binding site. Mg(2+)-binding residues include Asp87, Glu159, Glu161, Asp180, and Asp182. An I-domain region spans residues 123 to 254 (DVEKYSKKTV…QTALKMIRQH (132 aa)). Glu159 provides a ligand contact to DNA. 2 residues coordinate DNA: Gly232 and Asp234. Residue Asp234 coordinates Mg(2+). Positions 338-346 (SQGRLESFF) are interaction with PCNA. The tract at residues 343-394 (ESFFGVSSSSSNKRKEAPDSEASAGKQVKTAAAVKPAKAASKKGPAKGGKKK) is disordered. Positions 368–381 (KQVKTAAAVKPAKA) are enriched in low complexity. A compositionally biased stretch (basic residues) spans 382–394 (ASKKGPAKGGKKK).

This sequence belongs to the XPG/RAD2 endonuclease family. FEN1 subfamily. As to quaternary structure, interacts with PCNA. Three molecules of FEN1 bind to one PCNA trimer with each molecule binding to one PCNA monomer. PCNA stimulates the nuclease activity without altering cleavage specificity. Mg(2+) is required as a cofactor. Phosphorylated. Phosphorylation upon DNA damage induces relocalization to the nuclear plasma.

Its subcellular location is the nucleus. It localises to the nucleolus. The protein localises to the nucleoplasm. It is found in the mitochondrion. Functionally, structure-specific nuclease with 5'-flap endonuclease and 5'-3' exonuclease activities involved in DNA replication and repair. During DNA replication, cleaves the 5'-overhanging flap structure that is generated by displacement synthesis when DNA polymerase encounters the 5'-end of a downstream Okazaki fragment. It enters the flap from the 5'-end and then tracks to cleave the flap base, leaving a nick for ligation. Also involved in the long patch base excision repair (LP-BER) pathway, by cleaving within the apurinic/apyrimidinic (AP) site-terminated flap. Acts as a genome stabilization factor that prevents flaps from equilibrating into structures that lead to duplications and deletions. Also possesses 5'-3' exonuclease activity on nicked or gapped double-stranded DNA, and exhibits RNase H activity. Also involved in replication and repair of rDNA and in repairing mitochondrial DNA. This Physcomitrium patens (Spreading-leaved earth moss) protein is Flap endonuclease 1-A.